Reading from the N-terminus, the 289-residue chain is Protein FraH (289 aa).

A DZANK-type zinc finger spans residues 4–49; sequence CPNCNHPNPDGAVQCEACYTPLPATSNCPNCGATVQSDAAFCGQCG. Residues 18-48 fold into a zinc finger; it reads CEACYTPLPATSNCPNCGATVQSDAAFCGQC. Residues 204–260 form the FHA domain; it reads VHIGKPNDRIPPDVDVSGFANSEIVSRVHADIRLEGDAHYIEDVGSSNGTYINNLPL.

Putative heterocyst to vegetative cell connection. This Nostoc sp. (strain PCC 7120 / SAG 25.82 / UTEX 2576) protein is Protein FraH (fraH).